Here is a 257-residue protein sequence, read N- to C-terminus: Global transcriptional regulator CodY (257 aa).

A GAF domain region spans residues 1–155 (MSLLSKTREL…AATVLGMEIL (155 aa)). A DNA-binding region (H-T-H motif) is located at residues 203–222 (ASKVADRVGITRSVIVNALR).

The protein belongs to the CodY family.

The protein resides in the cytoplasm. In terms of biological role, DNA-binding global transcriptional regulator which is involved in the adaptive response to starvation and acts by directly or indirectly controlling the expression of numerous genes in response to nutrient availability. During rapid exponential growth, CodY is highly active and represses genes whose products allow adaptation to nutrient depletion. The sequence is that of Global transcriptional regulator CodY from Staphylococcus carnosus (strain TM300).